The following is a 66-amino-acid chain: Early E3 7.7 kDa protein (66 aa).

Residues N7 and N24 are each glycosylated (N-linked (GlcNAc...) asparagine; by host). Residues 44–64 (ITILIVIGILILSVILYFLFS) form a helical membrane-spanning segment.

The protein resides in the host nucleus membrane. The chain is Early E3 7.7 kDa protein from Human adenovirus B serotype 7 (HAdV-7).